A 214-amino-acid chain; its full sequence is Protein verrocchio (214 aa).

Probably homomultimerizes. Component of the MTV complex, composed of moi/modigliani, tea and ver/verrocchio. Interacts with moi/modigliani and tea (via C-terminus); the interactions are direct and require fully intact moi/modigliani and ver/verrocchio. The MTV complex is recruited to telomeres by the HipHop-HOAP complex, consisting of HipHop, cav/HOAP and Su(var)205/HP1 to form the terminin telomere-capping complex. Interacts with cav/HOAP; the interaction is direct. Interacts with Su(var)205/HP1; the interaction is indirect and probably requires cav/HOAP or moi/modigliani. Probably interacts with peo (via N-terminus and UBC domain).

It localises to the nucleus. It is found in the chromosome. The protein resides in the telomere. Part of the MTV complex that associates with the HipHop-HOAP complex to form the terminin telomere-capping complex involved in telomere maintenance and prevention of telomere fusion. As part of the MTV complex binds single stranded DNA in a sequence-independent manner, protecting it from degradation. This Drosophila melanogaster (Fruit fly) protein is Protein verrocchio.